Reading from the N-terminus, the 1060-residue chain is Centrosomal protein of 131 kDa (1060 aa).

Positions methionine 1 to proline 11 are enriched in polar residues. A disordered region spans residues methionine 1–threonine 96. The interval methionine 1–leucine 244 is interaction with PLK4. Phosphoserine occurs at positions 14 and 35. Composition is skewed to polar residues over residues arginine 32 to threonine 50 and leucine 73 to glycine 88. A Phosphoserine; by MAPKAPK2 modification is found at serine 47. At serine 78 the chain carries Phosphoserine; by MAPKAPK2 and PLK4. Phosphoserine occurs at positions 89, 105, 114, 146, and 150. Disordered regions lie at residues leucine 136–arginine 155 and glutamate 217–arginine 248. Over residues glutamate 217–lysine 226 the composition is skewed to basic and acidic residues. The IQ domain occupies asparagine 263–glycine 283. Basic and acidic residues-rich tracts occupy residues glutamate 314–arginine 327 and lysine 344–glutamate 363. Residues glutamate 314–arginine 437 are disordered. Low complexity predominate over residues alanine 398 to serine 408. The segment covering proline 409–glutamine 424 has biased composition (basic and acidic residues). The residue at position 473 (threonine 473) is a Phosphothreonine. Serine 481 carries the post-translational modification Phosphoserine.

It belongs to the CEP131 family. As to quaternary structure, self-associates. Associates with the centriolar satellite BBSome protein complex Interacts with BBS4; the interaction limits BBS4 availability for association with the BBSome complex, and hence negatively regulates ciliary localization of the BBSome complex. Interacts with MIB1. Interacts with PCM1; the interaction increases in response to ultraviolet light (UV) radiation. Associates with microtubule; association to microtubule is reduced in response to cellular stress, such as UV stimulation, in a process that requires p38 MAP kinase signaling. Interacts with CEP290, DCTN1, MAP1LC3B, PCNT, PCM1 and CEP152. Interacts with 14-3-3 proteins following UV-induced phosphorylation by MAPKAPK2; this inhibits formation of novel centriolar satellites. Interacts with SDCCAG8. Interacts with CCDC61. Interacts with PLK4. Post-translationally, ubiquitinated. Undergoes monoubiquitination catalyzed by the E3 ubiquitin-protein ligase MIB1 in proliferating cells, preventing cilia formation. Monoubiquitination by MIB1 is inhibited in response to cellular stress, such as ultraviolet light (UV) radiation or heat shock, resulting in ciliogenesis restoration. MAPKAPK2-dependent phosphorylation at Ser-47 and Ser-78 occurs in response to cellular stress such as exposure to ultraviolet irradiation and promotes binding to 14-3-3 proteins which leads to cytoplasmic sequestration of CEP131 and blocks formation of new centriolar satellites. Phosphorylation at Ser-78 mediated by PLK4 is essential for proper organization and integrity of centriolar satellites but is dispensable for its localization to centrioles and its function in ciliogenesis. In terms of tissue distribution, localized to the pre-acrosome region of round and elongated spermatids in testis but also present in ovary, brain and adipose tissue.

It is found in the cytoplasm. Its subcellular location is the cytoskeleton. It localises to the microtubule organizing center. The protein resides in the centrosome. The protein localises to the centriolar satellite. It is found in the centriole. Its subcellular location is the cilium basal body. It localises to the cytoplasmic vesicle. The protein resides in the secretory vesicle. The protein localises to the acrosome. Functionally, component of centriolar satellites contributing to the building of a complex and dynamic network required to regulate cilia/flagellum formation. In proliferating cells, MIB1-mediated ubiquitination induces its sequestration within centriolar satellites, precluding untimely cilia formation initiation. In contrast, during normal and ultraviolet or heat shock cellular stress-induced ciliogenesis, its non-ubiquitinated form is rapidly displaced from centriolar satellites and recruited to centrosome/basal bodies in a microtubule- and p38 MAPK-dependent manner. Also acts as a negative regulator of BBSome ciliary trafficking. Plays a role in sperm flagellar formation; may be involved in the regulation of intraflagellar transport (IFT) and/or intramanchette (IMT) trafficking, which are important for axoneme extension and/or cargo delivery to the nascent sperm tail. Required for optimal cell proliferation and cell cycle progression; may play a role in the regulation of genome stability and centriole duplication in non-ciliogenic cells. Involved in centriole duplication. Required for CEP152, WDR62 and CEP63 centrosomal localization and promotes the centrosomal localization of CDK2. Essential for maintaining proper centriolar satellite integrity. The protein is Centrosomal protein of 131 kDa (Cep131) of Mus musculus (Mouse).